Reading from the N-terminus, the 308-residue chain is PHO85 cyclin-2 (308 aa).

Positions 18–146 (EMVQYLASTT…LLEYFDWDVT (129 aa)) constitute a Cyclin N-terminal domain. A disordered region spans residues 248–270 (SPRTYNIDSKHDNKENRPIPTIK). Residues 255–264 (DSKHDNKENR) are compositionally biased toward basic and acidic residues.

It belongs to the cyclin family. PCL1,2 subfamily. Forms a cyclin-CDK complex with PHO85. Interacts with RVS167.

Its subcellular location is the cytoplasm. It is found in the nucleus. Its function is as follows. G1/S-specific cyclin partner of the cyclin-dependent kinase (CDK) PHO85. Essential for the control of the cell cycle at the G1/S (start) transition. Together with cyclin PCL1, positively controls degradation of sphingoid long chain base kinase LCB4. The PCL2-PHO85 cyclin-CDK holoenzyme phosphorylates LCB4, which is required for its ubiquitination and degradation. PCL2-PHO85 also phosphorylates RVS167, linking cyclin-CDK activity with organization of the actin cytoskeleton. In Saccharomyces cerevisiae (strain ATCC 204508 / S288c) (Baker's yeast), this protein is PHO85 cyclin-2 (PCL2).